Consider the following 916-residue polypeptide: Major intrinsically disordered Notch2-binding receptor 1 (916 aa).

The Cytoplasmic portion of the chain corresponds to 1–891 (METSQETSLF…AEFRRAKVCK (891 aa)). 5 disordered regions span residues 390–409 (EEKL…PAPE), 553–591 (KSDC…SEEE), 648–675 (SLTS…GPKL), 705–726 (TRPS…IASI), and 745–782 (NEEE…LPKQ). Basic and acidic residues-rich tracts occupy residues 553 to 564 (KSDCDSSPEHNL) and 575 to 591 (KGDK…SEEE). Residue S711 is modified to Phosphoserine. The segment covering 750–771 (KDTGPGDNKDWHRKSKEADRQY) has biased composition (basic and acidic residues). The chain crosses the membrane as a helical span at residues 892-912 (IAALIAAAACTVILVIVVPIC). Over 913–916 (TMKS) the chain is Extracellular.

It belongs to the MINAR family. As to quaternary structure, interacts with NOTCH2; this interaction increases MINAR1 stability. Interacts (via N-terminus) with DEPTOR (via PDZ domain); this interaction may stabilize DEPTOR protein by impairing its ubiquitination. In terms of tissue distribution, widely expressed, including in breast epithelial cells and endothelial cells (at protein level). Expression is down-regulated in advanced breast tumors (at protein level).

It is found in the cell membrane. Its function is as follows. Intrinsically disordered protein which may negatively regulate mTOR signaling pathway by stabilizing the mTOR complex component DEPTOR. Negatively regulates angiogenesis. Negatively regulates cell growth. Negatively regulates neurite outgrowth in hippocampal neurons. The sequence is that of Major intrinsically disordered Notch2-binding receptor 1 from Homo sapiens (Human).